A 148-amino-acid chain; its full sequence is Large ribosomal subunit protein bL9 (148 aa).

Belongs to the bacterial ribosomal protein bL9 family.

Binds to the 23S rRNA. The protein is Large ribosomal subunit protein bL9 of Bifidobacterium longum (strain DJO10A).